The chain runs to 600 residues: Proline--tRNA ligase (600 aa).

Belongs to the class-II aminoacyl-tRNA synthetase family. ProS type 1 subfamily. As to quaternary structure, homodimer.

It localises to the cytoplasm. It carries out the reaction tRNA(Pro) + L-proline + ATP = L-prolyl-tRNA(Pro) + AMP + diphosphate. Its function is as follows. Catalyzes the attachment of proline to tRNA(Pro) in a two-step reaction: proline is first activated by ATP to form Pro-AMP and then transferred to the acceptor end of tRNA(Pro). As ProRS can inadvertently accommodate and process non-cognate amino acids such as alanine and cysteine, to avoid such errors it has two additional distinct editing activities against alanine. One activity is designated as 'pretransfer' editing and involves the tRNA(Pro)-independent hydrolysis of activated Ala-AMP. The other activity is designated 'posttransfer' editing and involves deacylation of mischarged Ala-tRNA(Pro). The misacylated Cys-tRNA(Pro) is not edited by ProRS. The sequence is that of Proline--tRNA ligase from Prochlorococcus marinus (strain AS9601).